The chain runs to 677 residues: DNA ligase (677 aa).

Residues 35-39 (DAVYD), 84-85 (SL), and glutamate 115 each bind NAD(+). The N6-AMP-lysine intermediate role is filled by lysine 117. NAD(+) contacts are provided by arginine 138, glutamate 177, lysine 296, and lysine 320. Residues cysteine 414, cysteine 417, cysteine 432, and cysteine 437 each contribute to the Zn(2+) site. Positions 599-677 (NGILKLNGKT…ETQLLEILEE (79 aa)) constitute a BRCT domain.

This sequence belongs to the NAD-dependent DNA ligase family. LigA subfamily. The cofactor is Mg(2+). Mn(2+) serves as cofactor.

It carries out the reaction NAD(+) + (deoxyribonucleotide)n-3'-hydroxyl + 5'-phospho-(deoxyribonucleotide)m = (deoxyribonucleotide)n+m + AMP + beta-nicotinamide D-nucleotide.. DNA ligase that catalyzes the formation of phosphodiester linkages between 5'-phosphoryl and 3'-hydroxyl groups in double-stranded DNA using NAD as a coenzyme and as the energy source for the reaction. It is essential for DNA replication and repair of damaged DNA. The sequence is that of DNA ligase from Nostoc sp. (strain PCC 7120 / SAG 25.82 / UTEX 2576).